Consider the following 682-residue polypeptide: Potassium-transporting ATPase ATP-binding subunit (682 aa).

Transmembrane regions (helical) follow at residues 34-54 (PVMF…LAMV), 58-78 (IAGS…TVLF), 219-239 (IALT…TATL), and 254-274 (VLVA…LSAI). The 4-aspartylphosphate intermediate role is filled by aspartate 307. Residues aspartate 344, glutamate 348, 377–384 (FTAQSRMS), and lysine 395 each bind ATP. Residues aspartate 518 and aspartate 522 each coordinate Mg(2+). A run of 3 helical transmembrane segments spans residues 588 to 608 (FAII…LNVM), 616 to 636 (AILS…PLAL), and 662 to 682 (LVVP…LGLA).

The protein belongs to the cation transport ATPase (P-type) (TC 3.A.3) family. Type IA subfamily. The system is composed of three essential subunits: KdpA, KdpB and KdpC.

It localises to the cell inner membrane. The enzyme catalyses K(+)(out) + ATP + H2O = K(+)(in) + ADP + phosphate + H(+). Its function is as follows. Part of the high-affinity ATP-driven potassium transport (or Kdp) system, which catalyzes the hydrolysis of ATP coupled with the electrogenic transport of potassium into the cytoplasm. This subunit is responsible for energy coupling to the transport system and for the release of the potassium ions to the cytoplasm. In Salmonella typhimurium (strain LT2 / SGSC1412 / ATCC 700720), this protein is Potassium-transporting ATPase ATP-binding subunit.